Here is a 126-residue protein sequence, read N- to C-terminus: Large ribosomal subunit protein bL12 (126 aa).

The protein belongs to the bacterial ribosomal protein bL12 family. In terms of assembly, homodimer. Part of the ribosomal stalk of the 50S ribosomal subunit. Forms a multimeric L10(L12)X complex, where L10 forms an elongated spine to which 2 to 4 L12 dimers bind in a sequential fashion. Binds GTP-bound translation factors.

In terms of biological role, forms part of the ribosomal stalk which helps the ribosome interact with GTP-bound translation factors. Is thus essential for accurate translation. This chain is Large ribosomal subunit protein bL12, found in Rhizobium meliloti (strain 1021) (Ensifer meliloti).